We begin with the raw amino-acid sequence, 617 residues long: DNA double-strand break repair protein Mre11 (617 aa).

4 residues coordinate Mn(2+): aspartate 12, histidine 14, aspartate 53, and asparagine 88. Histidine 89 serves as the catalytic Proton donor. Histidine 158, aspartate 189, and histidine 191 together coordinate Mn(2+). The span at 395–432 shows a compositional bias: low complexity; it reads SPVDPSSSVSSIESSGSVSPIDSVSTVSPSSPSSSAII. Disordered regions lie at residues 395–437 and 513–617; these read SPVD…EPEE and VEDE…GDYL. Over residues 529–547 the composition is skewed to polar residues; sequence APQSSSPVSFSDNSQTGFS. A compositionally biased stretch (low complexity) spans 549 to 559; sequence ISPPESIPSPE. Residues 560-583 show a composition bias toward basic and acidic residues; sequence ILKENSEADADEKPVDGKLSEEKP.

The protein belongs to the MRE11/RAD32 family. As to quaternary structure, homodimer. Forms a heterotetramer composed of two Mre11 subunits and two Rad50 subunits. The cofactor is Mn(2+).

With respect to regulation, nuclease activity is regulated by Rad50. Functionally, part of the Rad50/Mre11 complex, which is involved in the early steps of DNA double-strand break (DSB) repair. The complex may facilitate opening of the processed DNA ends to aid in the recruitment of HerA and NurA. Mre11 binds to DSB ends and has both double-stranded 3'-5' exonuclease activity and single-stranded endonuclease activity. The chain is DNA double-strand break repair protein Mre11 from Methanosarcina mazei (strain ATCC BAA-159 / DSM 3647 / Goe1 / Go1 / JCM 11833 / OCM 88) (Methanosarcina frisia).